Reading from the N-terminus, the 408-residue chain is Secreted effector protein SseJ (408 aa).

Ser151 acts as the Nucleophile in catalysis. Active-site residues include Asp381 and His384.

This sequence belongs to the 'GDSL' lipolytic enzyme family. In terms of assembly, interacts with RhoA and indirectly with SifA.

The protein localises to the secreted. It localises to the host cytoplasm. Its function is as follows. Effector proteins function to alter host cell physiology and promote bacterial survival in host tissues. This protein is required for endosomal tubulation and negatively regulates the formation of Salmonella-induced filaments (Sifs) in epithelial cells. Has both deacylase and esterification activities in vitro, but esterification is probably the dominant activity in host cells. Significantly contributes to cholesterol esterification, which reduces cellular cholesterol in cells and abrogates the ability of SifA to associate with cholesterol and LAMP-1 vesicles. This chain is Secreted effector protein SseJ (sseJ), found in Salmonella typhimurium (strain LT2 / SGSC1412 / ATCC 700720).